The following is a 311-amino-acid chain: Probable dihydroorotate dehydrogenase A (fumarate) (311 aa).

Substrate contacts are provided by residues Lys45, 69 to 73 (NSMGL), and Asn128. Residue 45 to 46 (KT) participates in FMN binding. Asn128 is an FMN binding site. Catalysis depends on Cys131, which acts as the Nucleophile. The FMN site is built by Lys165 and Val193. 194-195 (NS) lines the substrate pocket. Residues Gly220, 248–249 (GG), and 270–271 (GT) each bind FMN.

It belongs to the dihydroorotate dehydrogenase family. Type 1 subfamily. In terms of assembly, homodimer. FMN is required as a cofactor.

Its subcellular location is the cytoplasm. It carries out the reaction (S)-dihydroorotate + fumarate = orotate + succinate. Its pathway is pyrimidine metabolism; UMP biosynthesis via de novo pathway. Its function is as follows. Catalyzes the conversion of dihydroorotate to orotate with fumarate as the electron acceptor. This chain is Probable dihydroorotate dehydrogenase A (fumarate) (pyrDA), found in Streptococcus pneumoniae serotype 4 (strain ATCC BAA-334 / TIGR4).